A 361-amino-acid polypeptide reads, in one-letter code: UPF0283 membrane protein Smed_1530 (361 aa).

Residues 1 to 40 are disordered; sequence MNDDSNGRRRRPAAFPVGTEDATSRELEQTPRRAPGSFSD. The segment covering 22–31 has biased composition (basic and acidic residues); sequence ATSRELEQTP. A run of 2 helical transmembrane segments spans residues 76-96 and 109-129; these read FGKI…GLWV and WLGY…LIVV.

This sequence belongs to the UPF0283 family.

Its subcellular location is the cell inner membrane. This chain is UPF0283 membrane protein Smed_1530, found in Sinorhizobium medicae (strain WSM419) (Ensifer medicae).